A 245-amino-acid polypeptide reads, in one-letter code: Carboxymethylenebutenolidase homolog (245 aa).

Ala-2 is subject to N-acetylalanine. Active-site residues include Cys-132, Asp-179, and His-212. Ser-223 carries the post-translational modification Phosphoserine.

The protein belongs to the dienelactone hydrolase family.

It localises to the cytoplasm. The protein resides in the cytosol. Cysteine hydrolase. This chain is Carboxymethylenebutenolidase homolog (Cmbl), found in Mus musculus (Mouse).